We begin with the raw amino-acid sequence, 151 residues long: Nucleoside diphosphate kinase (151 aa).

Lys-11, Phe-59, Arg-87, Arg-104, and Asn-114 together coordinate ATP. His-117 serves as the catalytic Pros-phosphohistidine intermediate.

Belongs to the NDK family. Homotrimer. Mg(2+) is required as a cofactor.

The enzyme catalyses a 2'-deoxyribonucleoside 5'-diphosphate + ATP = a 2'-deoxyribonucleoside 5'-triphosphate + ADP. The catalysed reaction is a ribonucleoside 5'-diphosphate + ATP = a ribonucleoside 5'-triphosphate + ADP. Major role in the synthesis of nucleoside triphosphates other than ATP. The ATP gamma phosphate is transferred to the NDP beta phosphate via a ping-pong mechanism, using a phosphorylated active-site intermediate. The protein is Nucleoside diphosphate kinase (ndk1) of Schizosaccharomyces pombe (strain 972 / ATCC 24843) (Fission yeast).